The following is a 245-amino-acid chain: Ribosomal RNA small subunit methyltransferase J (245 aa).

S-adenosyl-L-methionine-binding positions include 94–95 (RD), 110–111 (ER), and Asp164.

Belongs to the methyltransferase superfamily. RsmJ family.

The protein localises to the cytoplasm. The enzyme catalyses guanosine(1516) in 16S rRNA + S-adenosyl-L-methionine = N(2)-methylguanosine(1516) in 16S rRNA + S-adenosyl-L-homocysteine + H(+). Functionally, specifically methylates the guanosine in position 1516 of 16S rRNA. The polypeptide is Ribosomal RNA small subunit methyltransferase J (Dechloromonas aromatica (strain RCB)).